Here is a 257-residue protein sequence, read N- to C-terminus: MVKSHIGSWLLVLFVATWSDIGFCKKRPKPGGGWNTGGSRYPGQGSPGGNRYPPQGGGGWGQPHGGGWGQPHGGGWGQPHGGGWGQPHGGGGWGQGGGSHGQWGKPSKPKTNMKHVAGAAAAGAVVGGLGGYMLGSAMSRPLIHFGNDYEDRYYRENMYRYPNQVYYKPVDQYSNQNNLVHDCVNITVKQHTVTTTTKGENFTETDMKIMERVVEQMCVTQYQQESEAYYQRGASAILFSPPPVILLISLLILLIVG.

The N-terminal stretch at 1 to 24 (MVKSHIGSWLLVLFVATWSDIGFC) is a signal peptide. The segment at 25–234 (KKRPKPGGGW…ESEAYYQRGA (210 aa)) is interaction with GRB2, ERI3 and SYN1. The tract at residues 27 to 114 (RPKPGGGWNT…KPSKPKTNMK (88 aa)) is disordered. Repeat copies occupy residues 54 to 62 (PQGGGGWGQ), 63 to 70 (PHGGGWGQ), 71 to 78 (PHGGGWGQ), 79 to 86 (PHGGGWGQ), and 87 to 95 (PHGGGGWGQ). A 5 X 8 AA tandem repeats of P-H-G-G-G-W-G-Q region spans residues 54–95 (PQGGGGWGQPHGGGWGQPHGGGWGQPHGGGWGQPHGGGGWGQ). A compositionally biased stretch (gly residues) spans 55-101 (QGGGGWGQPHGGGWGQPHGGGWGQPHGGGWGQPHGGGGWGQGGGSHG). Residues H64, G65, G66, H72, G73, G74, H80, G81, G82, H88, G90, and G91 each contribute to the Cu(2+) site. A disulfide bridge connects residues C183 and C218. Residues N185 and N201 are each glycosylated (N-linked (GlcNAc...) asparagine). The GPI-anchor amidated alanine moiety is linked to residue A234. The propeptide at 235-257 (SAILFSPPPVILLISLLILLIVG) is removed in mature form.

The protein belongs to the prion family. In terms of assembly, monomer and homodimer. Has a tendency to aggregate into amyloid fibrils containing a cross-beta spine, formed by a steric zipper of superposed beta-strands. Soluble oligomers may represent an intermediate stage on the path to fibril formation. Copper binding may promote oligomerization. Interacts with GRB2, APP, ERI3/PRNPIP and SYN1. Mislocalized cytosolically exposed PrP interacts with MGRN1; this interaction alters MGRN1 subcellular location and causes lysosomal enlargement. Interacts with KIAA1191.

It localises to the cell membrane. The protein localises to the golgi apparatus. In terms of biological role, its primary physiological function is unclear. Has cytoprotective activity against internal or environmental stresses. May play a role in neuronal development and synaptic plasticity. May be required for neuronal myelin sheath maintenance. May play a role in iron uptake and iron homeostasis. Soluble oligomers are toxic to cultured neuroblastoma cells and induce apoptosis (in vitro). Association with GPC1 (via its heparan sulfate chains) targets PRNP to lipid rafts. Also provides Cu(2+) or Zn(2+) for the ascorbate-mediated GPC1 deaminase degradation of its heparan sulfate side chains. The sequence is that of Major prion protein (PRNP) from Mustela putorius furo (European domestic ferret).